The sequence spans 631 residues: uncharacterized protein (631 aa).

The next 9 helical transmembrane spans lie at 42-62, 76-96, 106-128, 152-172, 344-364, 366-386, 398-418, 429-449, and 464-484; these read VLVG…IGGF, ALKL…GTLL, VLGL…GPAP, AGLT…GWLW, ALKY…FGFA, SYWI…VFTL, IGVI…YIAF, MLIV…ALVI, and IARL…TMLL.

It belongs to the YccS/YhfK family.

It is found in the cell membrane. This is an uncharacterized protein from Bacillus subtilis (strain 168).